The chain runs to 435 residues: Nucleoredoxin (435 aa).

N-acetylserine is present on Ser-2. The Thioredoxin domain maps to 167–314 (PKPFREVIAG…FPWHPKPVLE (148 aa)).

The protein belongs to the nucleoredoxin family. As to quaternary structure, associates with the phosphatase 2A holoenzyme. Interacts with PPP2CA; the interaction is direct. Interacts with DVL1 (via PDZ domain); the interaction is direct and regulated by oxidative stress. Widely expressed with higher expression in testis and skin.

It localises to the cytoplasm. Its subcellular location is the cytosol. The protein resides in the nucleus. The catalysed reaction is [protein]-dithiol + NAD(+) = [protein]-disulfide + NADH + H(+). The enzyme catalyses [protein]-dithiol + NADP(+) = [protein]-disulfide + NADPH + H(+). In terms of biological role, functions as a redox-dependent negative regulator of the Wnt signaling pathway, possibly by preventing ubiquitination of DVL3 by the BCR(KLHL12) complex. May also function as a transcriptional regulator act as a regulator of protein phosphatase 2A (PP2A). This is Nucleoredoxin (Nxn) from Mus musculus (Mouse).